The following is a 1470-amino-acid chain: Roundabout homolog 2 (1470 aa).

The signal sequence occupies residues 1 to 21 (MNPLMFTLLLLFGFLCIQIDG). At 22 to 863 (SRLRQEDFPP…EQITDVVKQP (842 aa)) the chain is on the extracellular side. 5 Ig-like C2-type domains span residues 31-127 (PRIV…ASLE), 133-220 (DDFR…AELT), 225-309 (PTFL…ATLT), 318-413 (PQFV…LEVT), and 422-508 (PIIL…AVLD). Residues C52 and C110 are joined by a disulfide bond. N-linked (GlcNAc...) asparagine glycosylation is present at N123. 3 disulfides stabilise this stretch: C154/C203, C246/C293, and C339/C395. The N-linked (GlcNAc...) asparagine glycan is linked to N430. C443 and C492 are disulfide-bonded. 3 Fibronectin type-III domains span residues 528-622 (PPSK…TQDI), 641-739 (VVVR…TEEA), and 743-840 (PPQS…IGGR). N-linked (GlcNAc...) asparagine glycosylation is found at N756, N786, N793, and N849. The helical transmembrane segment at 864–884 (AFIAGIGGACWVILMGFSIWL) threads the bilayer. The Cytoplasmic portion of the chain corresponds to 885-1470 (YWRRKKRKGL…GSNSQGQFTE (586 aa)). Disordered regions lie at residues 1036–1089 (GFGY…LPGT), 1129–1159 (EDRV…LTPS), 1190–1371 (IQSN…DCPA), and 1383–1470 (DWIN…QFTE). Positions 1144–1158 (PAISFGQQSTATLTP) are enriched in polar residues. The residue at position 1157 (T1157) is a Phosphothreonine. S1159 is subject to Phosphoserine. Over residues 1194-1203 (TPPPQPPAPP) the composition is skewed to pro residues. A compositionally biased stretch (acidic residues) spans 1215-1231 (LETDVPDEDADDEEEPL). Polar residues predominate over residues 1243-1288 (TPGSSMDNLDSSVTGKAFSSSQRQRPTSPFSTDSNTSAAQNQSQRP). Over residues 1315 to 1325 (DLPPPPDPPPG) the composition is skewed to pro residues. Polar residues predominate over residues 1328–1343 (LRQQIGLSQHSGNVEN). A compositionally biased stretch (low complexity) spans 1413-1437 (SKPSFPSPGGHSSSGTSSSKGSTGP). Over residues 1461-1470 (GSNSQGQFTE) the composition is skewed to polar residues.

The protein belongs to the immunoglobulin superfamily. ROBO family. In terms of assembly, interacts with SLIT2. As to expression, expressed in embryonal spinal cord.

The protein resides in the membrane. Its function is as follows. Receptor for SLIT2, and probably SLIT1, which are thought to act as molecular guidance cue in cellular migration, including axonal navigation at the ventral midline of the neural tube and projection of axons to different regions during neuronal development. This is Roundabout homolog 2 (Robo2) from Mus musculus (Mouse).